The sequence spans 371 residues: Serine/threonine-protein kinase 17B (371 aa).

One can recognise a Protein kinase domain in the interval 33–293 (TLTPKELGRG…AESCLSHSWL (261 aa)). ATP contacts are provided by residues 39–47 (LGRGKFAVV) and K62. D158 acts as the Proton acceptor in catalysis. The disordered stretch occupies residues 308 to 345 (SESSQTQDLSLRSSEDKTPKSCNGSCGDREDKENIPED). The span at 309-319 (ESSQTQDLSLR) shows a compositional bias: polar residues.

It belongs to the protein kinase superfamily. CAMK Ser/Thr protein kinase family. DAP kinase subfamily. Interacts with CHP1; the interaction induces CHP1 to translocate from the Golgi to the nucleus. Post-translationally, autophosphorylated. As to expression, highly expressed in thymus, spleen, and testis, lower levels present in the brain.

The protein resides in the nucleus. The protein localises to the cell membrane. It localises to the endoplasmic reticulum-Golgi intermediate compartment. The catalysed reaction is L-seryl-[protein] + ATP = O-phospho-L-seryl-[protein] + ADP + H(+). It carries out the reaction L-threonyl-[protein] + ATP = O-phospho-L-threonyl-[protein] + ADP + H(+). In terms of biological role, acts as a positive regulator of apoptosis. Phosphorylates myosin light chains. This Rattus norvegicus (Rat) protein is Serine/threonine-protein kinase 17B (Stk17b).